The chain runs to 632 residues: Epithelial sodium channel subunit alpha (632 aa).

The Cytoplasmic portion of the chain corresponds to 1-49; sequence MTKEEKNEKEALIEFFSSYRELFEFFCSNTTIHGAIRLVCSRRNRMKTA. The chain crosses the membrane as a helical span at residues 50–70; the sequence is FWLVLFLVTFGLMYWQFGLLF. Residues 71–520 are Extracellular-facing; sequence GQYFSYPVSI…SQWSLWFGSS (450 aa). Intrachain disulfides connect cysteine 97–cysteine 264, cysteine 189–cysteine 196, cysteine 241–cysteine 248, cysteine 355–cysteine 440, cysteine 377–cysteine 417, cysteine 377–cysteine 436, cysteine 381–cysteine 432, cysteine 390–cysteine 417, cysteine 390–cysteine 440, and cysteine 392–cysteine 406. The helical transmembrane segment at 521–541 threads the bilayer; the sequence is VLSVVEMLELVIDFVIIGVMI. At 542 to 632 the chain is on the cytoplasmic side; it reads LLHRYYYKKA…YYEENGGRRN (91 aa). A compositionally biased stretch (low complexity) spans 612–622; it reads SRSSSMRSNRS. Positions 612-632 are disordered; that stretch reads SRSSSMRSNRSYYEENGGRRN. A compositionally biased stretch (basic and acidic residues) spans 623–632; that stretch reads YYEENGGRRN.

This sequence belongs to the amiloride-sensitive sodium channel (TC 1.A.6) family. SCNN1A subfamily. As to quaternary structure, heterotrimer; containing an alpha/SCNN1A, a beta/SCNN1B and a gamma/SCNN1G subunit. Interacts with shroom1.

It localises to the apical cell membrane. The protein resides in the cell projection. The protein localises to the cilium. Its subcellular location is the cytoplasmic granule. It is found in the cytoplasm. It localises to the cytoplasmic vesicle. The protein resides in the secretory vesicle. The protein localises to the acrosome. Its subcellular location is the flagellum. The enzyme catalyses Na(+)(in) = Na(+)(out). Its activity is regulated as follows. Originally identified and characterized by its inhibition by the diuretic drug amiloride. Its function is as follows. This is one of the three pore-forming subunits of the heterotrimeric epithelial sodium channel (ENaC), a critical regulator of sodium balance and fluid homeostasis. ENaC operates in epithelial tissues, where it mediates the electrodiffusion of sodium ions from extracellular fluid through the apical membrane of cells, with water following osmotically. It plays a key role in maintaining sodium homeostasis through electrogenic sodium reabsorption in the kidneys. This is Epithelial sodium channel subunit alpha from Xenopus laevis (African clawed frog).